A 229-amino-acid polypeptide reads, in one-letter code: Acetylcholine-binding protein (229 aa).

The N-terminal stretch at 1-19 (MRRNIFCLACLWIVQACLS) is a signal peptide. N-linked (GlcNAc...) asparagine glycosylation occurs at asparagine 85. Residues 114 to 217 (PEVLTPQLAR…PEAYEDVEVS (104 aa)) form the Ig-like domain. Residues cysteine 142 and cysteine 155 are joined by a disulfide bond.

In terms of assembly, homopentamer. N-glycosylated. As to expression, expressed by glial cells.

The protein resides in the synaptic cleft. Its function is as follows. Binds to acetylcholine. Modulates neuronal synaptic transmission. The sequence is that of Acetylcholine-binding protein from Lymnaea stagnalis (Great pond snail).